The sequence spans 79 residues: Small ribosomal subunit protein bS18 (79 aa).

It belongs to the bacterial ribosomal protein bS18 family. Part of the 30S ribosomal subunit. Forms a tight heterodimer with protein bS6.

Functionally, binds as a heterodimer with protein bS6 to the central domain of the 16S rRNA, where it helps stabilize the platform of the 30S subunit. The polypeptide is Small ribosomal subunit protein bS18 (Nitrobacter hamburgensis (strain DSM 10229 / NCIMB 13809 / X14)).